Consider the following 368-residue polypeptide: Probable dual-specificity RNA methyltransferase RlmN (368 aa).

The Proton acceptor role is filled by Glu109. Residues 115-355 (YPDRVTMCIS…VTVRDTRGQE (241 aa)) form the Radical SAM core domain. The cysteines at positions 122 and 360 are disulfide-linked. [4Fe-4S] cluster-binding residues include Cys129, Cys133, and Cys136. S-adenosyl-L-methionine contacts are provided by residues 184–185 (GE), Ser218, 241–243 (SLH), and Asn317. Catalysis depends on Cys360, which acts as the S-methylcysteine intermediate.

This sequence belongs to the radical SAM superfamily. RlmN family. [4Fe-4S] cluster is required as a cofactor.

The protein localises to the cytoplasm. It catalyses the reaction adenosine(2503) in 23S rRNA + 2 reduced [2Fe-2S]-[ferredoxin] + 2 S-adenosyl-L-methionine = 2-methyladenosine(2503) in 23S rRNA + 5'-deoxyadenosine + L-methionine + 2 oxidized [2Fe-2S]-[ferredoxin] + S-adenosyl-L-homocysteine. The catalysed reaction is adenosine(37) in tRNA + 2 reduced [2Fe-2S]-[ferredoxin] + 2 S-adenosyl-L-methionine = 2-methyladenosine(37) in tRNA + 5'-deoxyadenosine + L-methionine + 2 oxidized [2Fe-2S]-[ferredoxin] + S-adenosyl-L-homocysteine. Its function is as follows. Specifically methylates position 2 of adenine 2503 in 23S rRNA and position 2 of adenine 37 in tRNAs. The sequence is that of Probable dual-specificity RNA methyltransferase RlmN from Streptomyces griseus subsp. griseus (strain JCM 4626 / CBS 651.72 / NBRC 13350 / KCC S-0626 / ISP 5235).